The primary structure comprises 446 residues: Xylose isomerase 2 (446 aa).

Catalysis depends on residues His109 and Asp112. Residues Glu240, Glu276, His279, Asp304, Asp315, Asp317, and Asp347 each coordinate Mg(2+).

It belongs to the xylose isomerase family. Homotetramer. Requires Mg(2+) as cofactor.

The protein resides in the cytoplasm. The enzyme catalyses alpha-D-xylose = alpha-D-xylulofuranose. The protein is Xylose isomerase 2 of Xanthomonas campestris pv. campestris (strain 8004).